A 1118-amino-acid chain; its full sequence is Error-prone DNA polymerase (1118 aa).

A disordered region spans residues Gly1071–Gln1118.

This sequence belongs to the DNA polymerase type-C family. DnaE2 subfamily.

The protein localises to the cytoplasm. It catalyses the reaction DNA(n) + a 2'-deoxyribonucleoside 5'-triphosphate = DNA(n+1) + diphosphate. DNA polymerase involved in damage-induced mutagenesis and translesion synthesis (TLS). It is not the major replicative DNA polymerase. The protein is Error-prone DNA polymerase of Mesorhizobium japonicum (strain LMG 29417 / CECT 9101 / MAFF 303099) (Mesorhizobium loti (strain MAFF 303099)).